The sequence spans 121 residues: NADH-quinone oxidoreductase subunit A 1 (121 aa).

Helical transmembrane passes span 11 to 31 (IAIF…APFA), 65 to 85 (LVSI…PWAV), and 90 to 110 (MGWF…VGFI).

It belongs to the complex I subunit 3 family. In terms of assembly, NDH-1 is composed of 14 different subunits. Subunits NuoA, H, J, K, L, M, N constitute the membrane sector of the complex.

The protein localises to the cell inner membrane. It catalyses the reaction a quinone + NADH + 5 H(+)(in) = a quinol + NAD(+) + 4 H(+)(out). Its function is as follows. NDH-1 shuttles electrons from NADH, via FMN and iron-sulfur (Fe-S) centers, to quinones in the respiratory chain. The immediate electron acceptor for the enzyme in this species is believed to be ubiquinone. Couples the redox reaction to proton translocation (for every two electrons transferred, four hydrogen ions are translocated across the cytoplasmic membrane), and thus conserves the redox energy in a proton gradient. The polypeptide is NADH-quinone oxidoreductase subunit A 1 (Rhizobium meliloti (strain 1021) (Ensifer meliloti)).